Reading from the N-terminus, the 381-residue chain is MTCCFSCLNPRTKDIRVDIDNARCNSRYQTDSSVHGSDTTGTESISGILVNGKVNSPIPGGGARSFTFKELAAATRNFREVNLLGEGGFGRVYKGRLDSGQVVAIKQLNPDGLQGNREFIVEVLMLSLLHHPNLVTLIGYCTSGDQRLLVYEYMPMGSLEDHLFDLESNQEPLSWNTRMKIAVGAARGIEYLHCTANPPVIYRDLKSANILLDKEFSPKLSDFGLAKLGPVGDRTHVSTRVMGTYGYCAPEYAMSGKLTVKSDIYCFGVVLLELITGRKAIDLGQKQGEQNLVTWSRPYLKDQKKFGHLVDPSLRGKYPRRCLNYAIAIIAMCLNEEAHYRPFIGDIVVALEYLAAQSRSHEARNVSSPSPEISRTPRRDL.

The S-palmitoyl cysteine moiety is linked to residue Cys-3. Residues 78-354 (FREVNLLGEG…GDIVVALEYL (277 aa)) form the Protein kinase domain. Residues 84–92 (LGEGGFGRV) and Lys-106 each bind ATP. Asp-204 functions as the Proton acceptor in the catalytic mechanism. The tract at residues 362-381 (EARNVSSPSPEISRTPRRDL) is disordered.

It belongs to the protein kinase superfamily. Ser/Thr protein kinase family. Post-translationally, palmitoylation at Cys-3 and Cys-7 are required for plasma membrane location.

It is found in the cell membrane. It carries out the reaction L-seryl-[protein] + ATP = O-phospho-L-seryl-[protein] + ADP + H(+). The catalysed reaction is L-threonyl-[protein] + ATP = O-phospho-L-threonyl-[protein] + ADP + H(+). In terms of biological role, may be involved in plant defense signaling. In Arabidopsis thaliana (Mouse-ear cress), this protein is Probable serine/threonine-protein kinase PBL21.